Here is a 1388-residue protein sequence, read N- to C-terminus: Retrotransposon Gag-like protein 9 (1388 aa).

Disordered regions lie at residues 491-511, 769-790, 895-918, 1100-1138, and 1336-1388; these read ATAS…GAMS, TPLM…ASSS, GGVS…RRPS, TDSG…PKEV, and AMGN…HTNK. The segment covering 1103–1123 has biased composition (polar residues); sequence GEASTSHINITASGSKPTSHM. The segment covering 1359 to 1374 has biased composition (basic and acidic residues); sequence YLKEHGDPQEGLHDHL.

The protein is Retrotransposon Gag-like protein 9 of Homo sapiens (Human).